The sequence spans 105 residues: Protein SMALL AUXIN UP-REGULATED RNA 16 (105 aa).

Belongs to the ARG7 family. Expressed in etiolated hypocotyls, cotyledons, leaves, flowers and siliques.

Its subcellular location is the cell membrane. Its function is as follows. Provide a mechanistic link between auxin and plasma membrane H(+)-ATPases (PM H(+)-ATPases, e.g. AHA1 and AHA2), and triggers PM H(+)-ATPases activity by promoting phosphorylation of their C-terminal autoinhibitory domain as a result of PP2C-D subfamily of type 2C phosphatases inhibition, thus leading to the acidification of the apoplast and the facilitation of solutes and water uptake to drive cell expansion. Triggers plant growth probably by promoting cell elongation. Regulates branch angles and bending. The polypeptide is Protein SMALL AUXIN UP-REGULATED RNA 16 (Arabidopsis thaliana (Mouse-ear cress)).